The sequence spans 2515 residues: Polyprotein P1234 (2515 aa).

The Alphavirus-like MT domain maps to 30 to 260; it reads VAQQATPNDH…EHRASLQSWH (231 aa). The tract at residues 245 to 264 is nsP1 membrane-binding; it reads GSTLYPEHRASLQSWHLPSV. A lipid anchor (S-palmitoyl cysteine; by host) is attached at C420. The 156-residue stretch at 695 to 850 folds into the (+)RNA virus helicase ATP-binding domain; that stretch reads ELTNPPYHEL…RDICTKTFYK (156 aa). 726–733 is a binding site for a ribonucleoside 5'-triphosphate; that stretch reads GTPGSGKS. In terms of domain architecture, (+)RNA virus helicase C-terminal spans 851–999; the sequence is FISRRCTQPV…IEDWEAEHKG (149 aa). A Peptidase C9 domain is found at 1012–1341; the sequence is NPFSCKTNVC…CVISSVYEGT (330 aa). Residues 1013–1032 are nucleolus localization signal; sequence PFSCKTNVCWAKALEPILAT. The active-site For cysteine protease nsP2 activity is C1021. The Nuclear export signal signature appears at 1066-1075; the sequence is IKFFGMDLTS. The For cysteine protease nsP2 activity role is filled by H1098. The Nuclear localization signal motif lies at 1196 to 1200; the sequence is PHKRI. The Macro domain occupies 1348-1507; sequence APSYRTKREN…RIDAVLQLKE (160 aa). Positions 1371, 1379, 1459, 1460, and 1461 each coordinate ADP-D-ribose. 4 residues coordinate Zn(2+): C1610, C1612, C1635, and C1653. Disordered regions lie at residues 1678–1705 and 1777–1797; these read QPAA…DNTS and LAAA…SSAD. 2 short sequence motifs (FGDF; binding to host G3BP1) span residues 1839-1842 and 1862-1865; these read FGSF. Residues 2269–2384 enclose the RdRp catalytic domain; that stretch reads DPVLETDIAS…HGVVSDKEMA (116 aa).

As to quaternary structure, interacts with non-structural protein 3. Interacts with RNA-directed RNA polymerase nsP4. Interacts with protease nsP2. interacts with itself. Interacts with mRNA-capping enzyme nsP1. Interacts with host DDX1. Interacts with host DDX3. Interacts (via C-terminus) with host G3BP1; this interaction inhibits the formation of host stress granules on viral mRNAs and the nsp3-G3BP1 complexes bind viral RNAs and probably orchestrate the assembly of viral replication complexes. Interacts (via C-terminus) with host G3BP2; this interaction inhibits the formation of host stress granules on viral mRNAs and the nsp3-G3BP2 complexes bind viral RNAs and probably orchestrate the assembly of viral replication complexes. In terms of assembly, interacts with mRNA-capping enzyme nsP1. Interacts with protease nsP2. interacts with itself. As to quaternary structure, interacts with RNA-directed RNA polymerase nsP4. Interacts with mRNA-capping enzyme nsP1. Interacts with KPNA1/karyopherin-alpha1; this interaction probably allows the active transport of protease nsP2 into the host nucleus. Mg(2+) is required as a cofactor. Requires Mn(2+) as cofactor. In terms of processing, specific enzymatic cleavages in vivo yield mature proteins. The processing of the polyprotein is temporally regulated. In early stages (1.7 hpi), P1234 is first cleaved in trans through its nsP2 protease activity, releasing P123' and nsP4, which associate to form the early replication complex. At the same time, P1234 is also cut at the nsP1/nsP2 site early in infection but with lower efficiency. After replication of the viral minus-strand RNAs (4 hpi), the polyproteins are cut at the nsP1/nsP2 and nsP2/nsP3 sites very efficiently, preventing accumulation of P123' and P1234 and allowing the formation of the late replication complex. NsP3'/nsP4 site is not cleaved anymore and P34 is produced rather than nsP4. Specific enzymatic cleavages in vivo yield mature proteins. The processing of the polyprotein is temporally regulated. In early stages (1.7 hpi), P123 is cleaved at the nsP1/nsP2 site with low efficiency. After replication of the viral minus-strand RNAs (4 hpi), the polyproteins are cut at the nsP1/nsP2 and nsP2/nsP3 sites very efficiently, preventing accumulation of P123 and allowing the formation of the late replication complex. Post-translationally, specific enzymatic cleavages in vivo yield mature proteins. The processing of the polyprotein is temporally regulated. In early stages (1.7 hpi), P123' is cleaved at the nsP1/nsP2 site with low efficiency. After replication of the viral minus-strand RNAs (4 hpi), the polyproteins are cut at the nsP1/nsP2 and nsP2/nsP3 sites very efficiently, preventing accumulation of P123' and allowing the formation of the late replication complex. In terms of processing, palmitoylated by host palmitoyltransferases ZDHHC2 and ZDHHC19. Phosphorylated by host on serines and threonines. Post-translationally, ubiquitinated; targets the protein for rapid degradation via the ubiquitin system. Nsp4 is present in extremely low quantities due to low frequency of translation through the amber stop-codon and the degradation by the ubiquitin pathway.

It is found in the host cytoplasmic vesicle membrane. The protein resides in the host cell membrane. The protein localises to the host cell projection. It localises to the host filopodium. Its subcellular location is the host nucleus. It is found in the host cytoplasm. The enzyme catalyses GTP + S-adenosyl-L-methionine = N(7)-methyl-GTP + S-adenosyl-L-homocysteine. It catalyses the reaction N(7)-methyl-GTP + L-histidyl-[protein] = N(tele)-(N(7)-methylguanosine 5'-phospho)-L-histidyl-[protein] + diphosphate. It carries out the reaction N(tele)-(N(7)-methylguanosine 5'-phospho)-L-histidyl-[protein] + a 5'-end diphospho-(purine-ribonucleoside) in mRNA + H(+) = a 5'-end (N(7)-methyl 5'-triphosphoguanosine)-(purine-ribonucleoside) in mRNA + L-histidyl-[protein]. The catalysed reaction is a 5'-end triphospho-ribonucleoside in mRNA + H2O = a 5'-end diphospho-ribonucleoside in mRNA + phosphate + H(+). The enzyme catalyses a ribonucleoside 5'-triphosphate + H2O = a ribonucleoside 5'-diphosphate + phosphate + H(+). It catalyses the reaction ATP + H2O = ADP + phosphate + H(+). It carries out the reaction RNA(n) + a ribonucleoside 5'-triphosphate = RNA(n+1) + diphosphate. The catalysed reaction is RNA(n) + ATP = RNA(n)-3'-adenine ribonucleotide + diphosphate. The enzyme catalyses 4-O-(ADP-D-ribosyl)-L-aspartyl-[protein] + H2O = L-aspartyl-[protein] + ADP-D-ribose + H(+). It catalyses the reaction 5-O-(ADP-D-ribosyl)-L-glutamyl-[protein] + H2O = L-glutamyl-[protein] + ADP-D-ribose + H(+). It carries out the reaction ADP-alpha-D-ribose 1''-phosphate + H2O = ADP-D-ribose + phosphate. Its function is as follows. Inactive precursor of the viral replicase, which is activated by cleavages carried out by the viral protease nsP2. Functionally, the early replication complex formed by the polyprotein P123 and nsP4 synthesizes minus-strand RNAs. As soon P123 is cleaved into mature proteins, the plus-strand RNAs synthesis begins. The early replication complex formed by the polyprotein P123' and nsP4 synthesizes minus-strand RNAs. Polyprotein P123' is a short-lived polyprotein that accumulates during early stage of infection. As soon P123' is cleaved into mature proteins, the plus-strand RNAs synthesis begins. In terms of biological role, cytoplasmic capping enzyme that catalyzes two virus-specific reactions: methyltransferase and nsP1 guanylyltransferase. mRNA-capping is necessary since all viral RNAs are synthesized in the cytoplasm, and host capping enzymes are restricted to the nucleus. The enzymatic reaction involves a covalent link between 7-methyl-GMP and nsP1, whereas eukaryotic capping enzymes form a covalent complex only with GMP. nsP1 capping consists in the following reactions: GTP is first methylated into 7-methyl-GMP and then is covalently linked to nsP1 to form the m7GMp-nsP1 complex from which 7-methyl-GMP complex is transferred to the mRNA to create the cap structure. NsP1 is needed for the initiation of the minus-strand RNAs synthesis. Probably serves as a membrane anchor for the replication complex composed of nsP1-nsP4. Palmitoylated nsP1 is remodeling host cell cytoskeleton, and induces filopodium-like structure formation at the surface of the host cell. Interacts with host TMEM45B; this interaction leads to viral replication inhibition. Its function is as follows. Multifunctional protein whose N-terminus is part of the RNA polymerase complex and displays NTPase, RNA triphosphatase and helicase activities. NTPase and RNA triphosphatase are involved in viral RNA capping and helicase keeps a check on the dsRNA replication intermediates. The C-terminus harbors a protease that specifically cleaves the polyproteins and releases the mature proteins. Required for the shutoff of minus-strand RNAs synthesis. Specifically inhibits the host IFN response by promoting the nuclear export of host STAT1. Also inhibits host transcription by inducing rapid proteasome-dependent degradation of POLR2A, a catalytic subunit of the RNAPII complex. The resulting inhibition of cellular protein synthesis serves to ensure maximal viral gene expression and to evade host immune response. Functionally, seems to be essential for minus-strand RNAs and subgenomic 26S mRNAs synthesis. Displays mono-ADP-ribosylhydrolase activity. ADP-ribosylation is a post-translational modification that controls various processes of the host cell and the virus probably needs to revert it for optimal viral replication. Binds proteins of FXR family and sequesters them into the viral RNA replication complexes thereby inhibiting the formation of host stress granules on viral mRNAs. The nsp3'-FXR complexes bind viral RNAs and probably orchestrate the assembly of viral replication complexes, thanks to the ability of FXR family members to self-assemble and bind DNA. Seems to be essential for minus-strand RNAs and subgenomic 26S mRNAs synthesis. Displays mono-ADP-ribosylhydrolase activity. ADP-ribosylation is a post-translantional modification that controls various processes of the host cell and the virus probably needs to revert it for optimal viral replication. Binds proteins of G3BP family and sequesters them into the viral RNA replication complexes thereby inhibiting the formation of host stress granules on viral mRNAs. The nsp3-G3BP complexes bind viral RNAs and probably orchestrate the assembly of viral replication complexes, thanks to the ability of G3BP family members to self-assemble and bind DNA. In terms of biological role, RNA dependent RNA polymerase. Replicates genomic and antigenomic RNA by recognizing replications specific signals. The early replication complex formed by the polyprotein P123 and nsP4 synthesizes minus-strand RNAs. The late replication complex composed of fully processed nsP1-nsP4 is responsible for the production of genomic and subgenomic plus-strand RNAs. The core catalytic domain of nsP4 also possesses terminal adenylyltransferase (TATase) activity that is probably involved in maintenance and repair of the poly(A) tail, an element required for replication of the viral genome. Interacts with host TMEM45B; this interaction leads to viral replication inhibition. This Acrocephalus scirpaceus (Eurasian reed-warbler) protein is Polyprotein P1234.